Consider the following 152-residue polypeptide: Putative pre-16S rRNA nuclease (152 aa).

The protein belongs to the YqgF nuclease family.

The protein localises to the cytoplasm. In terms of biological role, could be a nuclease involved in processing of the 5'-end of pre-16S rRNA. The chain is Putative pre-16S rRNA nuclease from Bifidobacterium longum (strain DJO10A).